The primary structure comprises 170 residues: Flavin reductase (170 aa).

NAD(+) is bound by residues Ser51, His138, and 159 to 162; that span reads FYRG.

The protein belongs to the non-flavoprotein flavin reductase family. Homodimer. Likely forms a loose transient complex with monooxygenases for which it provides FMNH(2).

The catalysed reaction is FMNH2 + NAD(+) = FMN + NADH + 2 H(+). It carries out the reaction FADH2 + NAD(+) = FAD + NADH + 2 H(+). In terms of biological role, catalyzes the reduction of FMN, and to a lesser extent, FAD, using NADH as an electron donor. Is able to provide the FMNH(2) required for the Baeyer-Villiger oxidations catalyzed by 2,5-diketocamphane monooxygenases and 3,6-diketocamphane monooxygenase. NADPH acts as a very poor cosubstrate. The protein is Flavin reductase of Pseudomonas putida (Arthrobacter siderocapsulatus).